Reading from the N-terminus, the 421-residue chain is Cell division protein FtsA (421 aa).

It belongs to the FtsA/MreB family. In terms of assembly, self-interacts. Interacts with FtsZ.

Its subcellular location is the cell membrane. In terms of biological role, cell division protein that is involved in the assembly of the Z ring. May serve as a membrane anchor for the Z ring. This is Cell division protein FtsA from Buchnera aphidicola subsp. Baizongia pistaciae (strain Bp).